Consider the following 334-residue polypeptide: Cytoskeleton protein RodZ (334 aa).

At 1–111 (MNTEATHDQN…LGKRRKKRDG (111 aa)) the chain is on the cytoplasmic side. Residues 19–71 (LRNAREQLGLSQQAVAERLCLKVSTVRDIEEDKAPSDLASTFLRGYIRSYARL) form the HTH cro/C1-type domain. The segment at residues 30-49 (QQAVAERLCLKVSTVRDIEE) is a DNA-binding region (H-T-H motif). The helical; Signal-anchor for type II membrane protein transmembrane segment at 112–132 (WLMSFTWLVLFVVVGLTGAWW) threads the bilayer. Topologically, residues 133–334 (WQNHKAHQEE…TLNAEPTPAQ (202 aa)) are periplasmic. The interval 152 to 210 (AGLNADKDSGQSVPLDTGAVTSQDTTPAQTAPAPATPVDSTAATQTPAPTAAATQNTVV) is disordered. A compositionally biased stretch (polar residues) spans 161–175 (GQSVPLDTGAVTSQD). Residues 176 to 210 (TTPAQTAPAPATPVDSTAATQTPAPTAAATQNTVV) are compositionally biased toward low complexity.

It belongs to the RodZ family.

The protein resides in the cell inner membrane. Functionally, cytoskeletal protein that is involved in cell-shape control through regulation of the length of the long axis. This Salmonella gallinarum (strain 287/91 / NCTC 13346) protein is Cytoskeleton protein RodZ.